Reading from the N-terminus, the 205-residue chain is UPF0316 protein Cthe_2213 (205 aa).

The next 3 membrane-spanning stretches (helical) occupy residues Leu-15 to Val-37, Leu-44 to Met-64, and Phe-70 to Ile-90.

It belongs to the UPF0316 family.

It is found in the cell membrane. This chain is UPF0316 protein Cthe_2213, found in Acetivibrio thermocellus (strain ATCC 27405 / DSM 1237 / JCM 9322 / NBRC 103400 / NCIMB 10682 / NRRL B-4536 / VPI 7372) (Clostridium thermocellum).